Consider the following 1104-residue polypeptide: Ankyrin repeat- and BTB/POZ domain-containing protein 3 (1104 aa).

Residues 168–188 (IVLSWGLAAHCTAAALAALSL) form a helical membrane-spanning segment. The interval 260–301 (SCSGPGSGSGSGPGPSSGPGAAPAADKEREAPGGGAASGGAC) is disordered. Residues 264–276 (PGSGSGSGPGPSS) are compositionally biased toward gly residues. 5 ANK repeats span residues 603-632 (QGMTPLMYACVRGDEAMVQMLLDAGADLNV), 649-678 (RHWTALTFAVLHGHIPVVQLLLDAGAKVEG), 687-716 (YSETPLQLAAAVGNFELVSLLLERGADPLI), 730-759 (GDMNSFSQAAAHGHRNVFRKLLAQPEKEKS), and 825-854 (TWLESLRIAFQQHRRPLIQCLLKEFKTIQE). One can recognise a BTB domain in the interval 923 to 989 (SDVTFLVEGR…LYYGGPESLL (67 aa)).

The protein localises to the membrane. In Homo sapiens (Human), this protein is Ankyrin repeat- and BTB/POZ domain-containing protein 3.